The sequence spans 176 residues: I-Kappa-B like protein G1 (176 aa).

ANK repeat units follow at residues 56–88 (EGRQCTHIAAEYDVSNAVMKIELLVMLGADINS), 93–123 (FGNTLLHIAAGTENYQLAEWLCKKPGVELGA), and 127–156 (LYKTAYHIAYERQNARMMEILRVNGAVCDD).

The protein belongs to the polydnaviridae I-Kappa-B-like protein family.

In terms of biological role, suppresses the host immune response through NF-kappa-B inactivation. Possesses ankyrin repeat domains required for NF-kappa-B binding but lacks the regulatory regions required for dissociation from NF-kappa-B and degradation. Therefore, prevents host NF-kappa-B release and subsequent activation. This is I-Kappa-B like protein G1 (G3) from Microplitis demolitor (Parasitoid wasp).